The primary structure comprises 349 residues: Magnesium-protoporphyrin IX monomethyl ester [oxidative] cyclase (349 aa).

The interval 1–22 (MTATASASSVSGSLGRNELPPH) is disordered.

Belongs to the AcsF family. It depends on Fe cation as a cofactor.

The catalysed reaction is Mg-protoporphyrin IX 13-monomethyl ester + 3 NADPH + 3 O2 + 2 H(+) = 3,8-divinyl protochlorophyllide a + 3 NADP(+) + 5 H2O. It participates in porphyrin-containing compound metabolism; chlorophyll biosynthesis (light-independent). Its function is as follows. Catalyzes the formation of the isocyclic ring in chlorophyll biosynthesis. Mediates the cyclase reaction, which results in the formation of divinylprotochlorophyllide (Pchlide) characteristic of all chlorophylls from magnesium-protoporphyrin IX 13-monomethyl ester (MgPMME). This Prochlorococcus marinus (strain MIT 9211) protein is Magnesium-protoporphyrin IX monomethyl ester [oxidative] cyclase.